Reading from the N-terminus, the 259-residue chain is Flap endonuclease Xni (259 aa).

Aspartate 109 is a binding site for Mg(2+). One can recognise a 5'-3' exonuclease domain in the interval 165 to 255; that stretch reads LKPEQLADYW…FNLQDIRYEK (91 aa). K(+)-binding residues include leucine 176, alanine 177, isoleucine 187, and valine 190. The interval 189–194 is interaction with DNA; it reads GVGPKA.

The protein belongs to the Xni family. The cofactor is Mg(2+). Requires K(+) as cofactor.

Its function is as follows. Has flap endonuclease activity. During DNA replication, flap endonucleases cleave the 5'-overhanging flap structure that is generated by displacement synthesis when DNA polymerase encounters the 5'-end of a downstream Okazaki fragment. The sequence is that of Flap endonuclease Xni from Aliivibrio fischeri (strain ATCC 700601 / ES114) (Vibrio fischeri).